The chain runs to 158 residues: Copper transporter 2 (158 aa).

The segment at methionine 1 to serine 20 is disordered. A run of 2 helical transmembrane segments spans residues glycine 53–alanine 73 and tyrosine 104–glycine 124.

This sequence belongs to the copper transporter (Ctr) (TC 1.A.56) family. SLC31A subfamily. In terms of tissue distribution, highly expressed in leaves and at lower levels in roots, stems and flowers.

Its subcellular location is the membrane. Functionally, involved in the transport of copper. This chain is Copper transporter 2 (COPT2), found in Arabidopsis thaliana (Mouse-ear cress).